Reading from the N-terminus, the 556-residue chain is MSILNPRTSLEAGDSDDACCAAMASACCLNTKEDCDSPSTALPSGTPQSLEVEEVQGYDVEFDPPLESKYECPICLMALREAVQTPCGHRFCKACIVKSLRDAGHKCPVDNEILMENQLFPDNFAKREILSLKVKCPSQGCTETMELRHLERHLGQCQFASVECSQCQGSFPKSRLEKHMEHECGRRKIFCDNCGLAMAYEDMSGHELICPLAYVTCEYCQTNLIREQMPSHYSMDCTMAPIPCMYYEFGCTEKMQRNDLARHLQDFTQAHMRMMFQTLRSFSTTPTSHISDISFCDPNQFEPVPLSVAPAHPSHMPSHQDCSQETRNLRETIEQLEGRLVRQDHQIRELIAKMETQCTYVNELKHTIRSLEDKLLDVDGHHCNGVFIWKIKGFSGLQKTQEEEKPVVIHSPGFYTGKPGYKLCLRLHLQLPSAQRCANYISLFVHTMQGEYDSLLPWPLHGTIRLSILDQSEGAIIQDQEEVMDTKPDLLAFQRPTTQRNPKGFGYVTFMHLNTLKQRQYVKNDTLFVRCAVNIHLDVISPRREGFQPRSGDGAQ.

The RING-type; degenerate zinc finger occupies 72–111 (CPICLMALREAVQTPCGHRFCKACIVKSLRDAGHKCPVDN). 2 consecutive TRAF-type zinc fingers follow at residues 152–204 (RHLG…EDMS) and 205–261 (GHEL…NDLA). A coiled-coil region spans residues 318–356 (SHQDCSQETRNLRETIEQLEGRLVRQDHQIRELIAKMET). Residues 384–533 (NGVFIWKIKG…NDTLFVRCAV (150 aa)) enclose the MATH domain.

The protein belongs to the TNF receptor-associated factor family. A subfamily. In terms of assembly, homotrimer. Homooligomer.

It localises to the cytoplasm. The protein localises to the cell cortex. Its subcellular location is the nucleus. It is found in the lipid droplet. It carries out the reaction S-ubiquitinyl-[E2 ubiquitin-conjugating enzyme]-L-cysteine + [acceptor protein]-L-lysine = [E2 ubiquitin-conjugating enzyme]-L-cysteine + N(6)-ubiquitinyl-[acceptor protein]-L-lysine.. The protein operates within protein modification; protein ubiquitination. Functionally, E3 ubiquitin ligase that, together with UBE2N and UBE2V1, mediates the synthesis of 'Lys-63'-linked-polyubiquitin chains conjugated to proteins, such as IKBKG, IRAK1, AKT1 and AKT2. Also mediates ubiquitination of free/unanchored polyubiquitin chain that leads to MAP3K7 activation. This is TNF receptor-associated factor 6-B (traf6-b) from Xenopus laevis (African clawed frog).